The primary structure comprises 195 residues: UPF0314 protein RHE_CH03951 (195 aa).

4 helical membrane-spanning segments follow: residues 14–34, 64–84, 128–148, and 150–170; these read AFWF…EYLM, WYTP…YLIL, DSIL…FFAA, and APVA…GYVI.

Belongs to the UPF0314 family.

It localises to the cell membrane. The protein is UPF0314 protein RHE_CH03951 of Rhizobium etli (strain ATCC 51251 / DSM 11541 / JCM 21823 / NBRC 15573 / CFN 42).